Consider the following 487-residue polypeptide: Vacuolar protein sorting-associated protein 30 (487 aa).

The tract at residues Pro33–Glu129 is disordered. Residues Gln52–Ser62 are compositionally biased toward basic and acidic residues. Residues Ser81–Ala94 are compositionally biased toward polar residues. Residues Val152–Arg282 are a coiled coil. Residues Ser283–Asn480 are BARA. The segment at Trp456–Ala481 is required for membrane-association, autophagic function during starvation and normal autophagosome morphology.

It belongs to the beclin family. In terms of assembly, component of the autophagy-specific VPS34 PI3-kinase complex I; and of the VPS34 PI3-kinase complex II.

The protein resides in the endosome membrane. Its subcellular location is the vacuole membrane. It is found in the preautophagosomal structure membrane. In terms of biological role, required for cytoplasm to vacuole transport (Cvt), autophagy, nucleophagy, and mitophagy, as a part of the autophagy-specific VPS34 PI3-kinase complex I. This complex is essential to recruit the ATG8-phosphatidylinositol conjugate and the ATG12-ATG5 conjugate to the pre-autophagosomal structure. Also involved in endosome-to-Golgi retrograde transport as part of the VPS34 PI3-kinase complex II. Autophagy is required for proper vegetative growth, asexual/sexual reproduction, and full virulence. Autophagy is particularly involved in the biosynthesis of deoxynivalenol (DON), an important virulence determinant. The chain is Vacuolar protein sorting-associated protein 30 from Gibberella zeae (strain ATCC MYA-4620 / CBS 123657 / FGSC 9075 / NRRL 31084 / PH-1) (Wheat head blight fungus).